A 921-amino-acid chain; its full sequence is Phototropin-1B (921 aa).

Positions M1 to G11 are enriched in gly residues. Disordered stretches follow at residues M1–L59 and T88–A118. A compositionally biased stretch (low complexity) spans S40–A51. Polar residues predominate over residues R97–A117. The 75-residue stretch at V123–S197 folds into the PAS 1 domain. FMN-binding positions include N172–Q177, R190, N205, N215, and Q236. S-4a-FMN cysteine is present on C173. Residues S197–V251 form the PAC 1 domain. Residues R286–T295 are compositionally biased toward polar residues. Disordered stretches follow at residues R286–R345 and E366–D391. Basic and acidic residues-rich tracts occupy residues P312–S321 and E366–D376. A PAS 2 domain is found at R400–Q473. FMN contacts are provided by residues N449 to Q454, R467, N482, N492, and Q513. At C450 the chain carries S-4a-FMN cysteine. A PAC 2 domain is found at A474–G528. The region spanning F594–F881 is the Protein kinase domain. ATP contacts are provided by residues L600–V608 and K623. The active-site Proton acceptor is the D719.

Belongs to the protein kinase superfamily. Ser/Thr protein kinase family. In terms of assembly, homodimer. FMN serves as cofactor. In terms of processing, autophosphorylated in response to blue light irradiation. Post-translationally, 2 molecules of FMN bind covalently to cysteines after exposure to blue light and are reversed in the dark.

The enzyme catalyses L-seryl-[protein] + ATP = O-phospho-L-seryl-[protein] + ADP + H(+). It catalyses the reaction L-threonyl-[protein] + ATP = O-phospho-L-threonyl-[protein] + ADP + H(+). In terms of biological role, protein kinase that acts as a blue light photoreceptor in a signal-transduction pathway for phototropic responses. Regulates a wide range of physiological activities in plants that maximize the efficiency of photosynthesis, such as chloroplast relocations, stomata opening, and leaf expansion. The polypeptide is Phototropin-1B (PHOT1B) (Oryza sativa subsp. japonica (Rice)).